The chain runs to 74 residues: Histone H1.C8/H1.M1 (74 aa).

The segment at 1 to 74 (MSDAAVPPKK…KAVKKAPKKK (74 aa)) is disordered. Residues 11–74 (ASPKKAAAKK…KAVKKAPKKK (64 aa)) are compositionally biased toward basic residues.

The protein localises to the nucleus. The protein resides in the chromosome. The polypeptide is Histone H1.C8/H1.M1 (Trypanosoma cruzi).